A 166-amino-acid polypeptide reads, in one-letter code: Ribosomal RNA large subunit methyltransferase H (166 aa).

Residues leucine 85, glycine 116, and 135–140 (ISKMTF) each bind S-adenosyl-L-methionine.

It belongs to the RNA methyltransferase RlmH family. Homodimer.

It is found in the cytoplasm. The enzyme catalyses pseudouridine(1915) in 23S rRNA + S-adenosyl-L-methionine = N(3)-methylpseudouridine(1915) in 23S rRNA + S-adenosyl-L-homocysteine + H(+). In terms of biological role, specifically methylates the pseudouridine at position 1915 (m3Psi1915) in 23S rRNA. The protein is Ribosomal RNA large subunit methyltransferase H of Francisella tularensis subsp. holarctica (strain FTNF002-00 / FTA).